The chain runs to 188 residues: Protein GrpE (188 aa).

Belongs to the GrpE family. In terms of assembly, homodimer.

The protein resides in the cytoplasm. Functionally, participates actively in the response to hyperosmotic and heat shock by preventing the aggregation of stress-denatured proteins, in association with DnaK and GrpE. It is the nucleotide exchange factor for DnaK and may function as a thermosensor. Unfolded proteins bind initially to DnaJ; upon interaction with the DnaJ-bound protein, DnaK hydrolyzes its bound ATP, resulting in the formation of a stable complex. GrpE releases ADP from DnaK; ATP binding to DnaK triggers the release of the substrate protein, thus completing the reaction cycle. Several rounds of ATP-dependent interactions between DnaJ, DnaK and GrpE are required for fully efficient folding. The sequence is that of Protein GrpE from Chromobacterium violaceum (strain ATCC 12472 / DSM 30191 / JCM 1249 / CCUG 213 / NBRC 12614 / NCIMB 9131 / NCTC 9757 / MK).